Here is a 310-residue protein sequence, read N- to C-terminus: MFKFQKEQEIANIAGIKVGGQPGELPTLLAGTIFYNKHEIVEDAAKGLFDRIAAEKLVNLQEVGSDMTGNPHMVHIFGTTQESITRYIDFIAEVSESPFLIDSPEGTVRAHASRYVSEIGLADRAVYNSINMSITTSEIEALAQSDIDSSIILGFNAMDSSLRGRMEMLETGAGLLEEGLLSIADRCGIVNKLIDPSITPMGNGAGIALRMTITAKAKWGYPTGSGIHNAPSAWNWLNRQKEKNPVLYKICDVGSTCLQQAAAGDFILYGPIEYAQYVFPMAAMSDIMIAEAVADLDIEPASRHPINLLV.

The protein belongs to the MtrH family. In terms of assembly, may be part of a complex composed of 3 subunits; MtxA, MtxH and MtxX.

In Methanosarcina acetivorans (strain ATCC 35395 / DSM 2834 / JCM 12185 / C2A), this protein is Putative methyltransferase mtx subunit H (mtxH).